The primary structure comprises 156 residues: Small ribosomal subunit protein uS7 (156 aa).

Belongs to the universal ribosomal protein uS7 family. In terms of assembly, part of the 30S ribosomal subunit. Contacts proteins S9 and S11.

Its function is as follows. One of the primary rRNA binding proteins, it binds directly to 16S rRNA where it nucleates assembly of the head domain of the 30S subunit. Is located at the subunit interface close to the decoding center, probably blocks exit of the E-site tRNA. The polypeptide is Small ribosomal subunit protein uS7 (Acidobacterium capsulatum (strain ATCC 51196 / DSM 11244 / BCRC 80197 / JCM 7670 / NBRC 15755 / NCIMB 13165 / 161)).